The sequence spans 229 residues: Transmembrane emp24 domain-containing protein 5 (229 aa).

The signal sequence occupies residues 1-27 (MGGRMWLPFPVLLLSALPAALLRGAAG). Residues 28 to 196 (FTPSLDSDFT…IQESNFDRVN (169 aa)) are Lumenal-facing. The 82-residue stretch at 45-126 (KECFYQPMPL…EKVIFFELIL (82 aa)) folds into the GOLD domain. A helical membrane pass occupies residues 197–217 (FWSVVNLMVMVVVSAIQVYTL). Residues 218–229 (KSLFEDKRKSRT) lie on the Cytoplasmic side of the membrane.

The protein belongs to the EMP24/GP25L family. In terms of assembly, interacts with TMED9 and TMED10.

The protein resides in the endoplasmic reticulum membrane. It is found in the golgi apparatus. Its subcellular location is the cis-Golgi network membrane. The protein localises to the endoplasmic reticulum-Golgi intermediate compartment membrane. Functionally, potential role in vesicular protein trafficking, mainly in the early secretory pathway. Required for the maintenance of the Golgi apparatus; involved in protein exchange between Golgi stacks during assembly. Probably not required for COPI-vesicle-mediated retrograde transport. The protein is Transmembrane emp24 domain-containing protein 5 (Tmed5) of Mus musculus (Mouse).